A 740-amino-acid polypeptide reads, in one-letter code: Elongation factor 2 (740 aa).

Positions 23–264 (AQIRNAGTLA…MIIEHVPPPN (242 aa)) constitute a tr-type G domain. Residues 32 to 39 (AHVDHGKT), 98 to 102 (DTPGH), and 152 to 155 (NKID) contribute to the GTP site. Diphthamide is present on His-605.

Belongs to the TRAFAC class translation factor GTPase superfamily. Classic translation factor GTPase family. EF-G/EF-2 subfamily.

Its subcellular location is the cytoplasm. Functionally, catalyzes the GTP-dependent ribosomal translocation step during translation elongation. During this step, the ribosome changes from the pre-translocational (PRE) to the post-translocational (POST) state as the newly formed A-site-bound peptidyl-tRNA and P-site-bound deacylated tRNA move to the P and E sites, respectively. Catalyzes the coordinated movement of the two tRNA molecules, the mRNA and conformational changes in the ribosome. In Pyrobaculum arsenaticum (strain DSM 13514 / JCM 11321 / PZ6), this protein is Elongation factor 2.